Consider the following 486-residue polypeptide: Cardiolipin synthase A (486 aa).

Transmembrane regions (helical) follow at residues 3 to 23 (TFYT…IAGV) and 38 to 58 (MAWL…YLSV). 2 consecutive PLD phosphodiesterase domains span residues 219–246 (MDLR…VDPR) and 399–426 (EGGL…DMRS). Active-site residues include His224, Lys226, Asp231, His404, Lys406, and Asp411.

Belongs to the phospholipase D family. Cardiolipin synthase subfamily. ClsA sub-subfamily.

Its subcellular location is the cell inner membrane. The enzyme catalyses 2 a 1,2-diacyl-sn-glycero-3-phospho-(1'-sn-glycerol) = a cardiolipin + glycerol. In terms of biological role, catalyzes the reversible phosphatidyl group transfer from one phosphatidylglycerol molecule to another to form cardiolipin (CL) (diphosphatidylglycerol) and glycerol. The chain is Cardiolipin synthase A from Salmonella arizonae (strain ATCC BAA-731 / CDC346-86 / RSK2980).